The sequence spans 141 residues: Lutropin subunit beta (141 aa).

The N-terminal stretch at 1 to 20 is a signal peptide; the sequence is MEMLQGLLLLMLLSMGGTWA. Disulfide bonds link Cys-29–Cys-77, Cys-43–Cys-92, Cys-46–Cys-130, Cys-54–Cys-108, Cys-58–Cys-110, and Cys-113–Cys-120. Residues Asn-33 and Asn-50 are each glycosylated (N-linked (GlcNAc...) asparagine).

Belongs to the glycoprotein hormones subunit beta family. Heterodimer of a common alpha chain and a unique beta chain which confers biological specificity to thyrotropin, lutropin, follitropin and gonadotropin.

Its subcellular location is the secreted. Promotes spermatogenesis and ovulation by stimulating the testes and ovaries to synthesize steroids. The chain is Lutropin subunit beta (LHB) from Pongo pygmaeus (Bornean orangutan).